Reading from the N-terminus, the 154-residue chain is Large ribosomal subunit protein uL13 (154 aa).

This sequence belongs to the universal ribosomal protein uL13 family. As to quaternary structure, part of the 50S ribosomal subunit.

Its function is as follows. This protein is one of the early assembly proteins of the 50S ribosomal subunit, although it is not seen to bind rRNA by itself. It is important during the early stages of 50S assembly. The chain is Large ribosomal subunit protein uL13 from Rhodospirillum rubrum (strain ATCC 11170 / ATH 1.1.1 / DSM 467 / LMG 4362 / NCIMB 8255 / S1).